Reading from the N-terminus, the 205-residue chain is MATGPRYKVPMRRRREVRTDYHQRLRLLKSGKPRLVARVSNRHVRAQLITPGPDGDETHVAASSEHLSEYGWEAPTGNLPSAYLTGYLAGMRAIEAGLDEAVLDIGLNTATPGNKVFVVQEGAIDAGVSIPHNESVLADWSRNRGEHIAAYAEQRDEPLYNSDFDATTLPEHFDTVLETIQDADITMNTDADTDNNNSQSVGDNE.

This sequence belongs to the universal ribosomal protein uL18 family. As to quaternary structure, part of the 50S ribosomal subunit. Contacts the 5S and 23S rRNAs.

This is one of the proteins that bind and probably mediate the attachment of the 5S RNA into the large ribosomal subunit, where it forms part of the central protuberance. The chain is Large ribosomal subunit protein uL18 from Haloquadratum walsbyi (strain DSM 16790 / HBSQ001).